The following is a 312-amino-acid chain: Methionyl-tRNA formyltransferase (312 aa).

Residue 112–115 (SLLP) participates in (6S)-5,6,7,8-tetrahydrofolate binding.

Belongs to the Fmt family.

It carries out the reaction L-methionyl-tRNA(fMet) + (6R)-10-formyltetrahydrofolate = N-formyl-L-methionyl-tRNA(fMet) + (6S)-5,6,7,8-tetrahydrofolate + H(+). Its function is as follows. Attaches a formyl group to the free amino group of methionyl-tRNA(fMet). The formyl group appears to play a dual role in the initiator identity of N-formylmethionyl-tRNA by promoting its recognition by IF2 and preventing the misappropriation of this tRNA by the elongation apparatus. The protein is Methionyl-tRNA formyltransferase of Dehalococcoides mccartyi (strain ATCC BAA-2266 / KCTC 15142 / 195) (Dehalococcoides ethenogenes (strain 195)).